Here is a 419-residue protein sequence, read N- to C-terminus: L-rhamnose isomerase (419 aa).

Residues His-262, Asp-294, and Asp-296 each contribute to the Mn(2+) site.

Belongs to the rhamnose isomerase family. As to quaternary structure, homotetramer. It depends on Mn(2+) as a cofactor.

The protein resides in the cytoplasm. The catalysed reaction is L-rhamnopyranose = L-rhamnulose. It functions in the pathway carbohydrate degradation; L-rhamnose degradation; glycerone phosphate from L-rhamnose: step 1/3. Its function is as follows. Catalyzes the interconversion of L-rhamnose and L-rhamnulose. The sequence is that of L-rhamnose isomerase from Klebsiella pneumoniae subsp. pneumoniae (strain ATCC 700721 / MGH 78578).